Reading from the N-terminus, the 250-residue chain is 3-deoxy-manno-octulosonate cytidylyltransferase 1 (250 aa).

It belongs to the KdsB family.

Its subcellular location is the cytoplasm. The catalysed reaction is 3-deoxy-alpha-D-manno-oct-2-ulosonate + CTP = CMP-3-deoxy-beta-D-manno-octulosonate + diphosphate. The protein operates within nucleotide-sugar biosynthesis; CMP-3-deoxy-D-manno-octulosonate biosynthesis; CMP-3-deoxy-D-manno-octulosonate from 3-deoxy-D-manno-octulosonate and CTP: step 1/1. It participates in bacterial outer membrane biogenesis; lipopolysaccharide biosynthesis. Functionally, activates KDO (a required 8-carbon sugar) for incorporation into bacterial lipopolysaccharide in Gram-negative bacteria. The sequence is that of 3-deoxy-manno-octulosonate cytidylyltransferase 1 from Actinobacillus pleuropneumoniae serotype 5b (strain L20).